The primary structure comprises 219 residues: Hemolysin-3 (219 aa).

Transmembrane regions (helical) follow at residues 19-39 (AITH…LIIH), 49-69 (VVAF…STLL), 83-103 (ILDH…FLLI), 112-132 (TLLA…IFFV), 138-158 (ASTL…KPLY), 165-185 (GFSL…FFLW), and 194-214 (IWHL…LFYV).

Belongs to the UPF0073 (Hly-III) family.

The protein localises to the cell membrane. In terms of biological role, might be virulent against a mammalian host; when expressed in E.coli, the soluble extract has hemolytic activity on human erythrocytes. The activity is not inhibited by cholesterol or activated by 2-mercaptoethanol. Might be pore-forming protein. Its in vivo role in virulence is untested, nor has it been shown to be secreted by B.cereus. The sequence is that of Hemolysin-3 from Bacillus cereus.